A 336-amino-acid chain; its full sequence is Atypical chemokine receptor 1 (336 aa).

Residues 1-63 (MGNCLHTAEL…CNLLDDSALP (63 aa)) lie on the Extracellular side of the membrane. N-linked (GlcNAc...) asparagine glycosylation is found at Asn-16, Asn-27, and Asn-33. 2 disulfides stabilise this stretch: Cys-51–Cys-276 and Cys-129–Cys-195. Residues 64–84 (FFILTSVLGILASSTVLFILF) traverse the membrane as a helical segment. Topologically, residues 85 to 95 (RPLFRWQLCPG) are cytoplasmic. The helical transmembrane segment at 96–116 (WPVLAQLAVGSALFSIVVPIL) threads the bilayer. Over 117 to 129 (APGLGSTHSSALC) the chain is Extracellular. Residues 130-153 (SLGYCVWYGSAFAQALLLGCHASL) traverse the membrane as a helical segment. Residues 154–166 (GHRLGAGQVPGLT) are Cytoplasmic-facing. Residues 167–187 (LGLTVGIWGVAALLTLPVTLA) traverse the membrane as a helical segment. Residues 188–207 (SGASGGLCTPIHSTELKALQ) lie on the Extracellular side of the membrane. The chain crosses the membrane as a helical span at residues 208 to 228 (ATHTVACLAIFVLLPLGLFGA). Residues 229–244 (KGLKKALGMGPGPWMN) are Cytoplasmic-facing. Residues 245 to 265 (ILWAWFIFWWPHGVVLGLDFL) traverse the membrane as a helical segment. Residues 266 to 287 (VRSKLLLLSTCLAQQALDLLLN) are Extracellular-facing. A helical membrane pass occupies residues 288 to 308 (LAEALAILHCVATPLILALFY). The Cytoplasmic segment spans residues 309–336 (HQATRTLLPSLPLPEGWSSHLDTLGSKS).

Belongs to the G-protein coupled receptor 1 family. Atypical chemokine receptor subfamily.

It localises to the early endosome. The protein resides in the recycling endosome. It is found in the membrane. Atypical chemokine receptor that controls chemokine levels and localization via high-affinity chemokine binding that is uncoupled from classic ligand-driven signal transduction cascades, resulting instead in chemokine sequestration, degradation, or transcytosis. Also known as interceptor (internalizing receptor) or chemokine-scavenging receptor or chemokine decoy receptor. Has a promiscuous chemokine-binding profile, interacting with inflammatory chemokines of both the CXC and the CC subfamilies but not with homeostatic chemokines. Acts as a receptor for chemokines including CCL2, CCL5, CCL7, CCL11, CCL13, CCL14, CCL17, CXCL5, CXCL6, IL8/CXCL8, CXCL11, GRO, RANTES, MCP-1 and TARC. May regulate chemokine bioavailability and, consequently, leukocyte recruitment through two distinct mechanisms: when expressed in endothelial cells, it sustains the abluminal to luminal transcytosis of tissue-derived chemokines and their subsequent presentation to circulating leukocytes; when expressed in erythrocytes, serves as blood reservoir of cognate chemokines but also as a chemokine sink, buffering potential surges in plasma chemokine levels. This chain is Atypical chemokine receptor 1 (ACKR1), found in Gorilla gorilla gorilla (Western lowland gorilla).